The sequence spans 204 residues: Acyl-homoserine-lactone synthase (204 aa).

Belongs to the autoinducer synthase family.

It carries out the reaction a fatty acyl-[ACP] + S-adenosyl-L-methionine = an N-acyl-L-homoserine lactone + S-methyl-5'-thioadenosine + holo-[ACP] + H(+). Required for the synthesis of acyl-HSL autoinducers that bind to SolR. This chain is Acyl-homoserine-lactone synthase (solI), found in Ralstonia solanacearum (Pseudomonas solanacearum).